The following is a 426-amino-acid chain: MFGKSIEAYTKACEVIPGGVDSPVRAFKSVGGTPPFIKKGKGAYLYDVDGNKYVDFVQSWGPLIFGHCDKDIEKVVIKTAKKGLSFGAPTKLETKLASEIVEMYDNIDKVRFVSSGTEATMSAIRLARGVTGKNDIVKFEGCYHGHSDSLLVQAGSGLATFGSPSSPGVPSDLTKHTLLCEYNNIKNLEKCFADSSDIACIIIEPIAGNMGLVPASEEFLKACRELCDKHGALLIFDEVMSGFRASLTGASGIVKTKADIITFGKVIGAGMPVGAFAASKEIMSNLSPEGKIYQAGTLSGNPVAMAAGLKSLRKLKANPDIYDELNKKALRLVNGLKKIANKYEIPFQVDTRGSMFGFFFCEKEPKNFKDVGLCDFKRFATFHHEMLKKGFYFACSQYETGFICTKITNKDIDACLKAANEVMKNL.

Lys265 carries the N6-(pyridoxal phosphate)lysine modification.

It belongs to the class-III pyridoxal-phosphate-dependent aminotransferase family. HemL subfamily. In terms of assembly, homodimer. It depends on pyridoxal 5'-phosphate as a cofactor.

The protein localises to the cytoplasm. It carries out the reaction (S)-4-amino-5-oxopentanoate = 5-aminolevulinate. Its pathway is porphyrin-containing compound metabolism; protoporphyrin-IX biosynthesis; 5-aminolevulinate from L-glutamyl-tRNA(Glu): step 2/2. The protein is Glutamate-1-semialdehyde 2,1-aminomutase of Aliarcobacter butzleri (strain RM4018) (Arcobacter butzleri).